The chain runs to 215 residues: Ribosomal RNA small subunit methyltransferase G (215 aa).

S-adenosyl-L-methionine-binding positions include Gly-78, Leu-83, 128-129 (AE), and Arg-146.

Belongs to the methyltransferase superfamily. RNA methyltransferase RsmG family.

Its subcellular location is the cytoplasm. The enzyme catalyses guanosine(527) in 16S rRNA + S-adenosyl-L-methionine = N(7)-methylguanosine(527) in 16S rRNA + S-adenosyl-L-homocysteine. Its function is as follows. Specifically methylates the N7 position of guanine in position 527 of 16S rRNA. In Anaeromyxobacter dehalogenans (strain 2CP-C), this protein is Ribosomal RNA small subunit methyltransferase G.